A 134-amino-acid chain; its full sequence is Cytochrome b5 (134 aa).

At A2 the chain carries N-acetylalanine. N6-acetyllysine occurs at positions 7, 10, and 19. In terms of domain architecture, Cytochrome b5 heme-binding spans 9-85; it reads VKYYTLEEIK…SKTFIIGELH (77 aa). 2 residues coordinate heme: H44 and H68. The helical transmembrane segment at 109 to 131 threads the bilayer; that stretch reads WWTNWVIPAISALIVALMYRLYM.

Belongs to the cytochrome b5 family.

It localises to the endoplasmic reticulum membrane. Its subcellular location is the microsome membrane. Cytochrome b5 is a membrane-bound hemoprotein functioning as an electron carrier for several membrane-bound oxygenases. This chain is Cytochrome b5 (CYB5A), found in Oryctolagus cuniculus (Rabbit).